The primary structure comprises 516 residues: GMP synthase [glutamine-hydrolyzing] (516 aa).

One can recognise a Glutamine amidotransferase type-1 domain in the interval 8–198 (KILILDFGSQ…ALNICKCDAL (191 aa)). Cys84 functions as the Nucleophile in the catalytic mechanism. Catalysis depends on residues His172 and Glu174. The region spanning 199–391 (WNIENIIEND…LGLPYNMLYR (193 aa)) is the GMPS ATP-PPase domain. An ATP-binding site is contributed by 226-232 (SGGVDSS).

Homodimer.

The catalysed reaction is XMP + L-glutamine + ATP + H2O = GMP + L-glutamate + AMP + diphosphate + 2 H(+). It participates in purine metabolism; GMP biosynthesis; GMP from XMP (L-Gln route): step 1/1. Its function is as follows. Catalyzes the synthesis of GMP from XMP. The sequence is that of GMP synthase [glutamine-hydrolyzing] from Francisella philomiragia subsp. philomiragia (strain ATCC 25017 / CCUG 19701 / FSC 153 / O#319-036).